We begin with the raw amino-acid sequence, 1100 residues long: Regulator of nonsense transcripts 1 (1100 aa).

A compositionally biased stretch (low complexity) spans 42–53 (SQTQTQGQTQSQ). The disordered stretch occupies residues 42 to 67 (SQTQTQGQTQSQLDNQVNGPDGVLPN). Residues 94 to 251 (TKDLPVHACS…NKLEELWKEN (158 aa)) enclose the Upf1 CH-rich domain. Residues C102, C105, C116, S119, C124, H134, H138, C144, C162, C165, C188, and C192 each contribute to the Zn(2+) site. The C3H stretch occupies residues 102–134 (CSYCGIHDPACVVYCNTSKKWFCNGRGNTSGSH). A CC/SHH/C region spans residues 116-144 (CNTSKKWFCNGRGNTSGSHIVNHLVRAKC). The tract at residues 162–192 (CYNCGCRNVFLLGFIPAKADSVVVLLCRQPC) is C4. ATP contacts are provided by residues Q455, 475–479 (GTGKT), Q645, Y682, and E813. The tract at residues 978 to 1065 (LGQVNGPAAG…QPELSQDSYL (88 aa)) is disordered. Residues 982–993 (NGPAAGRGAPKG) are compositionally biased toward low complexity. A compositionally biased stretch (polar residues) spans 1012-1063 (SGQPNMPNSQASQDLVSQPFSQGPLTQGYITMSQPSQMSQPGLSQPELSQDS).

The protein belongs to the DNA2/NAM7 helicase family.

It is found in the cytoplasm. Its subcellular location is the P-body. It localises to the nucleus. The protein localises to the perinuclear region. Its function is as follows. RNA-dependent helicase and ATPase required for nonsense-mediated decay (NMD) of mRNAs containing premature stop codons. Is recruited to mRNAs upon translation termination and undergoes a cycle of phosphorylation and dephosphorylation; its phosphorylation appears to be a key step in NMD. The formation of an upf1-upf2-upf3 surveillance complex is believed to activate NMD. This is Regulator of nonsense transcripts 1 from Danio rerio (Zebrafish).